Reading from the N-terminus, the 134-residue chain is DNA-directed RNA polymerase subunit omega (134 aa).

The interval 76 to 102 is disordered; sequence EVDEPEPDPASMIAAGGAAAADSEEQD.

It belongs to the RNA polymerase subunit omega family. As to quaternary structure, the RNAP catalytic core consists of 2 alpha, 1 beta, 1 beta' and 1 omega subunit. When a sigma factor is associated with the core the holoenzyme is formed, which can initiate transcription.

The enzyme catalyses RNA(n) + a ribonucleoside 5'-triphosphate = RNA(n+1) + diphosphate. In terms of biological role, promotes RNA polymerase assembly. Latches the N- and C-terminal regions of the beta' subunit thereby facilitating its interaction with the beta and alpha subunits. This Rhizobium etli (strain ATCC 51251 / DSM 11541 / JCM 21823 / NBRC 15573 / CFN 42) protein is DNA-directed RNA polymerase subunit omega.